The sequence spans 470 residues: Pyruvate kinase I (470 aa).

Substrate is bound at residue Arg32. The K(+) site is built by Asn34, Ser36, Asp66, and Thr67. An ATP-binding site is contributed by 34-37 (NFSH). ATP is bound by residues Arg73 and Lys156. Mg(2+) is bound at residue Glu222. The substrate site is built by Gly245, Asp246, and Thr278. Asp246 contacts Mg(2+).

Belongs to the pyruvate kinase family. In terms of assembly, homotetramer. Requires Mg(2+) as cofactor. K(+) serves as cofactor.

It carries out the reaction pyruvate + ATP = phosphoenolpyruvate + ADP + H(+). It functions in the pathway carbohydrate degradation; glycolysis; pyruvate from D-glyceraldehyde 3-phosphate: step 5/5. The chain is Pyruvate kinase I (pykF) from Salmonella typhi.